We begin with the raw amino-acid sequence, 127 residues long: Aspartate 1-decarboxylase (127 aa).

Catalysis depends on Ser-25, which acts as the Schiff-base intermediate with substrate; via pyruvic acid. Ser-25 bears the Pyruvic acid (Ser) mark. Thr-57 lines the substrate pocket. The active-site Proton donor is the Tyr-58. 73–75 serves as a coordination point for substrate; sequence GAA.

This sequence belongs to the PanD family. As to quaternary structure, heterooctamer of four alpha and four beta subunits. Pyruvate is required as a cofactor. In terms of processing, is synthesized initially as an inactive proenzyme, which is activated by self-cleavage at a specific serine bond to produce a beta-subunit with a hydroxyl group at its C-terminus and an alpha-subunit with a pyruvoyl group at its N-terminus.

The protein localises to the cytoplasm. It catalyses the reaction L-aspartate + H(+) = beta-alanine + CO2. The protein operates within cofactor biosynthesis; (R)-pantothenate biosynthesis; beta-alanine from L-aspartate: step 1/1. Its function is as follows. Catalyzes the pyruvoyl-dependent decarboxylation of aspartate to produce beta-alanine. The polypeptide is Aspartate 1-decarboxylase (Bacillus subtilis (strain 168)).